Reading from the N-terminus, the 402-residue chain is Subtilisin-like protease 9 (402 aa).

The first 20 residues, 1–20, serve as a signal peptide directing secretion; sequence MGFFRQLFSLSLCALSLAIP. Residues 21–120 constitute a propeptide that is removed on maturation; sequence SKLIGLENTQ…VEVDRVVKLD (100 aa). Positions 36 to 119 constitute an Inhibitor I9 domain; sequence SYIVVMKSTI…YVEVDRVVKL (84 aa). The 273-residue stretch at 130–402 folds into the Peptidase S8 domain; it reads SWGLGRISHK…RKLLYNGSGA (273 aa). Active-site charge relay system residues include Asp162 and His193. Residue Asn254 is glycosylated (N-linked (GlcNAc...) asparagine). Catalysis depends on Ser348, which acts as the Charge relay system. N-linked (GlcNAc...) asparagine glycans are attached at residues Asn390 and Asn398.

It belongs to the peptidase S8 family.

It localises to the secreted. Functionally, secreted subtilisin-like serine protease with keratinolytic activity that contributes to pathogenicity. The protein is Subtilisin-like protease 9 (SUB9) of Arthroderma benhamiae (strain ATCC MYA-4681 / CBS 112371) (Trichophyton mentagrophytes).